Consider the following 1478-residue polypeptide: GTPase-activating protein and VPS9 domain-containing protein 1 (1478 aa).

The region spanning 147–385 (SYLLQVLRYL…AAFLDVVIGG (239 aa)) is the Ras-GAP domain. At serine 227 the chain carries Phosphoserine. Phosphothreonine is present on residues threonine 390 and threonine 458. The residue at position 460 (tyrosine 460) is a Phosphotyrosine. Serine 466 carries the phosphoserine modification. Threonine 470 carries the phosphothreonine modification. A phosphoserine mark is found at serine 566 and serine 569. 3 disordered regions span residues 574–608 (GISE…GSNG), 739–820 (ESCS…PPSQ), and 846–874 (HYAR…LPNF). A compositionally biased stretch (polar residues) spans 578–588 (GPSNRSNSVSS). Serine 742, serine 746, and serine 757 each carry phosphoserine. A compositionally biased stretch (polar residues) spans 758 to 777 (SRPSTPGLSVVSGISATSED). Position 762 is a phosphothreonine (threonine 762). Serine 766 carries the post-translational modification Phosphoserine. Residues 778–789 (IPNKIEDLRSEC) show a composition bias toward basic and acidic residues. Residues serine 876, serine 902, serine 903, serine 908, serine 914, and serine 966 each carry the phosphoserine modification. The span at 889–902 (QRHSYPERLVRSRS) shows a compositional bias: basic and acidic residues. 2 disordered regions span residues 889–1023 (QRHS…PRLS) and 1043–1064 (TSPS…DRDL). Composition is skewed to basic and acidic residues over residues 954 to 975 (DSSR…DRNR) and 997 to 1008 (EKQEKDKDDLGP). Positions 1012–1023 (STLTDDPSPRLS) are enriched in polar residues. A phosphoserine mark is found at serine 1019, serine 1046, serine 1096, and serine 1103. In terms of domain architecture, VPS9 spans 1338-1478 (ILRDQVLHEH…EFIKTIDDRK (141 aa)).

This sequence belongs to the GAPVD1 family. As to quaternary structure, interacts with TRIP10/CIP4. Interacts with RAB5A. In terms of assembly, (Microbial infection) Interacts with P.falciparum (strain 3D7) CK1. Expressed in erythrocytes (at protein level).

Its subcellular location is the membrane. It localises to the endosome. Its function is as follows. Acts both as a GTPase-activating protein (GAP) and a guanine nucleotide exchange factor (GEF), and participates in various processes such as endocytosis, insulin receptor internalization or LC2A4/GLUT4 trafficking. Acts as a GEF for the Ras-related protein RAB31 by exchanging bound GDP for free GTP, leading to regulate LC2A4/GLUT4 trafficking. In the absence of insulin, it maintains RAB31 in an active state and promotes a futile cycle between LC2A4/GLUT4 storage vesicles and early endosomes, retaining LC2A4/GLUT4 inside the cells. Upon insulin stimulation, it is translocated to the plasma membrane, releasing LC2A4/GLUT4 from intracellular storage vesicles. Also involved in EGFR trafficking and degradation, possibly by promoting EGFR ubiquitination and subsequent degradation by the proteasome. Has GEF activity for Rab5 and GAP activity for Ras. The chain is GTPase-activating protein and VPS9 domain-containing protein 1 (GAPVD1) from Homo sapiens (Human).